The chain runs to 508 residues: Photosystem II CP47 reaction center protein (508 aa).

A run of 6 helical transmembrane segments spans residues 21-36, 101-115, 140-156, 203-218, 237-252, and 457-472; these read SVHI…WAGS, IVFS…IWHW, GIHL…FGAF, IAAG…FHLS, VLSS…AFVV, and SFAL…HGSR.

This sequence belongs to the PsbB/PsbC family. PsbB subfamily. As to quaternary structure, PSII is composed of 1 copy each of membrane proteins PsbA, PsbB, PsbC, PsbD, PsbE, PsbF, PsbH, PsbI, PsbJ, PsbK, PsbL, PsbM, PsbT, PsbX, PsbY, PsbZ, Psb30/Ycf12, at least 3 peripheral proteins of the oxygen-evolving complex and a large number of cofactors. It forms dimeric complexes. Binds multiple chlorophylls. PSII binds additional chlorophylls, carotenoids and specific lipids. is required as a cofactor.

The protein localises to the plastid. It is found in the chloroplast thylakoid membrane. One of the components of the core complex of photosystem II (PSII). It binds chlorophyll and helps catalyze the primary light-induced photochemical processes of PSII. PSII is a light-driven water:plastoquinone oxidoreductase, using light energy to abstract electrons from H(2)O, generating O(2) and a proton gradient subsequently used for ATP formation. The protein is Photosystem II CP47 reaction center protein of Capsella bursa-pastoris (Shepherd's purse).